A 323-amino-acid chain; its full sequence is Thioredoxin reductase (323 aa).

42–49 (YRAEADGA) serves as a coordination point for FAD. The cysteines at positions 143 and 146 are disulfide-linked. 286 to 295 (DVLCNEVKQA) serves as a coordination point for FAD.

It belongs to the class-II pyridine nucleotide-disulfide oxidoreductase family. In terms of assembly, homodimer. It depends on FAD as a cofactor.

The protein localises to the cytoplasm. The enzyme catalyses [thioredoxin]-dithiol + NADP(+) = [thioredoxin]-disulfide + NADPH + H(+). This Aquifex aeolicus (strain VF5) protein is Thioredoxin reductase (trxB).